Here is a 149-residue protein sequence, read N- to C-terminus: 1,4-dihydroxy-2-naphthoyl-CoA hydrolase (149 aa).

Asp19 is a catalytic residue.

Belongs to the 4-hydroxybenzoyl-CoA thioesterase family. DHNA-CoA hydrolase subfamily.

The enzyme catalyses 1,4-dihydroxy-2-naphthoyl-CoA + H2O = 1,4-dihydroxy-2-naphthoate + CoA + H(+). It functions in the pathway cofactor biosynthesis; phylloquinone biosynthesis. The protein operates within quinol/quinone metabolism; 1,4-dihydroxy-2-naphthoate biosynthesis; 1,4-dihydroxy-2-naphthoate from chorismate: step 7/7. Catalyzes the hydrolysis of 1,4-dihydroxy-2-naphthoyl-CoA (DHNA-CoA) to 1,4-dihydroxy-2-naphthoate (DHNA), a reaction involved in phylloquinone (vitamin K1) biosynthesis. The polypeptide is 1,4-dihydroxy-2-naphthoyl-CoA hydrolase (Synechococcus sp. (strain CC9605)).